Reading from the N-terminus, the 74-residue chain is U-actitoxin-Bgr3a (74 aa).

The N-terminal stretch at 1 to 21 (MSAQRFLFLLVVTSLIAASLA) is a signal peptide. Residues 22-29 (APKDVQLT) constitute a propeptide that is removed on maturation. Intrachain disulfides connect cysteine 35–cysteine 68, cysteine 37–cysteine 61, and cysteine 51–cysteine 69.

This sequence belongs to the sea anemone type 3 (BDS) potassium channel toxin family.

Its subcellular location is the secreted. The protein localises to the nematocyst. In terms of biological role, potently and selectively inhibits voltage-gated potassium channels Kv11/KCNH/ERG. Acts as a gating-modifier toxin that shifts the voltage-dependence of ERG activation in the positive direction and suppresses its current amplitudes elicited by strong depolarizing pulses that maximally activate the channels. The polypeptide is U-actitoxin-Bgr3a (Bunodosoma granuliferum (Red warty sea anemone)).